The sequence spans 1209 residues: DNA-directed RNA polymerase subunit beta'' (1209 aa).

Cys233, Cys308, Cys315, and Cys318 together coordinate Zn(2+).

It belongs to the RNA polymerase beta' chain family. RpoC2 subfamily. In terms of assembly, in plastids the minimal PEP RNA polymerase catalytic core is composed of four subunits: alpha, beta, beta', and beta''. When a (nuclear-encoded) sigma factor is associated with the core the holoenzyme is formed, which can initiate transcription. Zn(2+) is required as a cofactor.

It is found in the plastid. Its subcellular location is the chloroplast. It carries out the reaction RNA(n) + a ribonucleoside 5'-triphosphate = RNA(n+1) + diphosphate. Functionally, DNA-dependent RNA polymerase catalyzes the transcription of DNA into RNA using the four ribonucleoside triphosphates as substrates. This chain is DNA-directed RNA polymerase subunit beta'', found in Pinus koraiensis (Korean pine).